Here is a 206-residue protein sequence, read N- to C-terminus: Outer-membrane lipoprotein LolB (206 aa).

Positions 1–18 (MKTFKFLTALFATAILTA) are cleaved as a signal peptide. Residue C19 is the site of N-palmitoyl cysteine attachment. The S-diacylglycerol cysteine moiety is linked to residue C19.

It belongs to the LolB family. As to quaternary structure, monomer.

It localises to the cell outer membrane. Functionally, plays a critical role in the incorporation of lipoproteins in the outer membrane after they are released by the LolA protein. The chain is Outer-membrane lipoprotein LolB from Haemophilus influenzae (strain PittEE).